The chain runs to 508 residues: Protein O-glucosyltransferase 3 (508 aa).

An N-terminal signal peptide occupies residues 1–24 (MLGVRRALLLPPLQLALLVAAGTG). One copy of the Filamin repeat lies at 25–134 (ARVSAPRSLA…VAQSPYILKG (110 aa)). A glycan (N-linked (GlcNAc...) asparagine) is linked at asparagine 307. Positions 480–508 (RDGMERVPQPDDSTSVRQCHRKRPEREEL) are disordered. The Prevents secretion from ER signature appears at 505-508 (REEL).

Belongs to the KDELC family.

Its subcellular location is the endoplasmic reticulum lumen. It catalyses the reaction L-seryl-[EGF-like domain protein] + UDP-alpha-D-glucose = 3-O-(beta-D-glucosyl)-L-seryl-[EGF-like domain protein] + UDP + H(+). It carries out the reaction L-seryl-[EGF-like domain protein] + UDP-alpha-D-xylose = 3-O-(beta-D-xylosyl)-L-seryl-[EGF-like domain protein] + UDP + H(+). The protein operates within protein modification; protein glycosylation. Its function is as follows. Protein glucosyltransferase that catalyzes the transfer of glucose from UDP-glucose to a serine residue within the consensus sequence peptide C-X-N-T-X-G-S-F-X-C. Can also catalyze the transfer of xylose from UDP-xylose but less efficiently. Specifically targets extracellular EGF repeats of proteins such as NOTCH1, NOTCH3, FBN1, FBN2 and LTBP1. May regulate the transport of NOTCH1 and NOTCH3 to the plasma membrane and thereby the Notch signaling pathway. The protein is Protein O-glucosyltransferase 3 (Poglut3) of Rattus norvegicus (Rat).